The chain runs to 614 residues: WD repeat-containing protein 26 (614 aa).

2 stretches are compositionally biased toward low complexity: residues 1 to 19 and 34 to 44; these read MQANGAAAAAAGEEPAGSG and SNGVLSSNNGL. A disordered region spans residues 1–65; that stretch reads MQANGAAAAA…PGGRKKKRLS (65 aa). Positions 67–99 constitute a LisH domain; sequence ADEDVIRLIGQHLHGLGLNQTVDLLMQESGCRL. Residues 100-184 enclose the CTLH domain; the sequence is EHPSATKFRN…EYLEDGKVLE (85 aa). 6 WD repeats span residues 306-345, 352-391, 397-437, 477-516, 519-561, and 564-604; these read EHCNEVWFCKFSNDGTKLATGSKDTTVIIWQVDPDTHQLK, GHAYGVSYLAWSPDDNYLIACGPDDCSELWLWNVQTGELR, SHED…DSWE, QEDHPIMSFTISRNGRLALLNVATQGVHLWDLQDRVLVRK, GVTQ…PIAE, and GHTR…DNQE.

Forms homooligomers. Identified in the CTLH complex that contains at least MAEA, RMND5A (or alternatively its paralog RMND5B), GID8, WDR26, and RANBP9 and/or RANBP10. Interacts with DDB1-CUL4A/B E3 ligase complexes.

The protein resides in the cytoplasm. It is found in the nucleus. Its subcellular location is the mitochondrion. In terms of biological role, G-beta-like protein involved in cell signal transduction. Acts as a negative regulator in MAPK signaling pathway. Functions as a scaffolding protein to promote G beta:gamma-mediated PLCB2 plasma membrane translocation and subsequent activation in leukocytes. Core component of the CTLH E3 ubiquitin-protein ligase complex that mediates ubiquitination and subsequent proteasomal degradation of target proteins. Acts as a negative regulator of the canonical Wnt signaling pathway through preventing ubiquitination of beta-catenin CTNNB1 by the beta-catenin destruction complex, thus negatively regulating CTNNB1 degradation. Serves as a scaffold to coordinate PI3K/AKT pathway-driven cell growth and migration. Protects cells from oxidative stress-induced apoptosis via the down-regulation of AP-1 transcriptional activity as well as by inhibiting cytochrome c release from mitochondria. Also protects cells by promoting hypoxia-mediated autophagy and mitophagy. In Xenopus tropicalis (Western clawed frog), this protein is WD repeat-containing protein 26 (wdr26).